The sequence spans 403 residues: Eukaryotic initiation factor 4A (403 aa).

Positions 1-20 (MDDRNEIPQDGPASMEPEGV) are disordered. A Q motif motif is present at residues 30–58 (DNFDDMNLREELLRGIYGYGFEKPSAIQQ). Positions 61 to 231 (IIPCVRGRDV…RCFMRDPVSI (171 aa)) constitute a Helicase ATP-binding domain. An ATP-binding site is contributed by 74 to 81 (AQSGTGKT). The DEAD box motif lies at 179-182 (DEAD). A Helicase C-terminal domain is found at 242–403 (GIKQFYVNVK…EMPANIADLI (162 aa)).

It belongs to the DEAD box helicase family. eIF4A subfamily. EIF4F is a multi-subunit complex, the composition of which varies with external and internal environmental conditions. It is composed of at least eIF4A, eIF4E1 and eIF4G1. Interacts with tud and vas. Interacts (via multiple contacts) with bam; the interaction is direct.

It is found in the cytoplasm. Its subcellular location is the cytoplasmic ribonucleoprotein granule. It carries out the reaction ATP + H2O = ADP + phosphate + H(+). Functionally, ATP-dependent RNA helicase which is a subunit of the eIF4F complex involved in cap recognition and is required for mRNA binding to ribosome. In the current model of translation initiation, eIF4A unwinds RNA secondary structures in the 5'-UTR of mRNAs which is necessary to allow efficient binding of the small ribosomal subunit, and subsequent scanning for the initiator codon. As a result, promotes cell proliferation and growth. Binds and antagonises the bam-bgcn complex; probably prevents bam mediated translational repression of shg/E-cadherin. Involved in germ cell formation. Involved in germline stem cell maintenance and proliferation; prevents differentiation. The protein is Eukaryotic initiation factor 4A of Drosophila melanogaster (Fruit fly).